The following is a 461-amino-acid chain: Photosynthetic NDH subunit of subcomplex B 1, chloroplastic (461 aa).

Residues 1-44 constitute a chloroplast transit peptide; sequence MASSLPLLPKPISPFFKTPPFSTSKPLVFLNFQTRLTSRSSDVS. Residues 66-90 form a disordered region; that stretch reads NEYGSLFADGKQDEDPRPPDNPDNP. Basic and acidic residues predominate over residues 75-85; the sequence is GKQDEDPRPPD.

As to quaternary structure, part of the chloroplast NDH complex, composed of a mixture of chloroplast and nucleus encoded subunits. Component of the NDH subcomplex B, at least composed of PnsB1, PnsB2, PnsB3, PnsB4 and PnsB5.

Its subcellular location is the plastid. It is found in the chloroplast thylakoid membrane. Its function is as follows. NDH shuttles electrons from NAD(P)H:plastoquinone, via FMN and iron-sulfur (Fe-S) centers, to quinones in the photosynthetic chain and possibly in a chloroplast respiratory chain. The immediate electron acceptor for the enzyme in this species is believed to be plastoquinone. Couples the redox reaction to proton translocation, and thus conserves the redox energy in a proton gradient. This Arabidopsis thaliana (Mouse-ear cress) protein is Photosynthetic NDH subunit of subcomplex B 1, chloroplastic.